A 497-amino-acid polypeptide reads, in one-letter code: Cobyric acid synthase (497 aa).

One can recognise a GATase cobBQ-type domain in the interval 257 to 431 (WLRVAAVRLP…WHGLLDNDDF (175 aa)). The active-site Nucleophile is Cys-338. Residue His-423 is part of the active site.

The protein belongs to the CobB/CobQ family. CobQ subfamily.

It participates in cofactor biosynthesis; adenosylcobalamin biosynthesis. Its function is as follows. Catalyzes amidations at positions B, D, E, and G on adenosylcobyrinic A,C-diamide. NH(2) groups are provided by glutamine, and one molecule of ATP is hydrogenolyzed for each amidation. This is Cobyric acid synthase from Mycolicibacterium paratuberculosis (strain ATCC BAA-968 / K-10) (Mycobacterium paratuberculosis).